The primary structure comprises 529 residues: Biotin-dependent 3-methylcrotonyl-coenzyme A carboxylase beta1 subunit (529 aa).

Residues 16-272 form the CoA carboxyltransferase N-terminal domain; that stretch reads HRRLVAELNN…CEPAQWDVRR (257 aa). The CoA carboxyltransferase C-terminal domain occupies 275–521; the sequence is EPKYPQAELY…SLCAHAPLDQ (247 aa).

Belongs to the AccD/PCCB family. In terms of assembly, the biotin-dependent acyl-CoA carboxylase complex is composed of AccA1, which contains the biotin carboxylase (BC) and biotin carboxyl carrier protein (BCCP) domains, and AccD1, which contains the carboxyl transferase (CT) domain. The AccA1/AccD1 complex forms a dodecamer.

It carries out the reaction 3-methylbut-2-enoyl-CoA + N(6)-carboxybiotinyl-L-lysyl-[protein] = 3-methyl-(2E)-glutaconyl-CoA + N(6)-biotinyl-L-lysyl-[protein]. The protein operates within amino-acid degradation; L-leucine degradation. Functionally, component of a biotin-dependent acyl-CoA carboxylase complex. This subunit transfers the CO2 from carboxybiotin to the CoA ester substrate. When associated with the alpha1 subunit AccA1, is involved in branched amino-acid catabolism with methylcrotonyl coenzyme A as the substrate. Shows residual with propionyl-CoA and acetyl-CoA. This chain is Biotin-dependent 3-methylcrotonyl-coenzyme A carboxylase beta1 subunit, found in Mycobacterium tuberculosis (strain ATCC 25618 / H37Rv).